The following is a 411-amino-acid chain: Arginine deiminase (411 aa).

The Amidino-cysteine intermediate role is filled by Cys401.

It belongs to the arginine deiminase family. In terms of processing, glycosylated.

The protein resides in the cytoplasm. It carries out the reaction L-arginine + H2O = L-citrulline + NH4(+). It functions in the pathway amino-acid degradation; L-arginine degradation via ADI pathway; carbamoyl phosphate from L-arginine: step 1/2. This Streptococcus pyogenes serotype M3 (strain ATCC BAA-595 / MGAS315) protein is Arginine deiminase.